Reading from the N-terminus, the 457-residue chain is MDEYIPFDDIVRQYDPDYTGKVSIQAFLEIVDDVDALRLNPEAPLLDNEQRQSAQDFIKDNSEIVVSTSEIKNLFYELTGLDPDTLPVNKLALRENGVLPRKSVAKPQKISENRIKRKDMFYQDASYITPRKGSPLSHSTPLSMFRTKNEYGSNKGFSHINKENADDSLIQQLYERIELQAAELRSKDEQVKELNARNAKLLEELDSSEEACKSCYTQAKTWEKKFREALRDSKEYAAQLQTIHEEYEQQQAHIVRMEELIHAVEKERKTETDYMKKESLSEQKERGAFMESNMILEEKVAHLQLENEQLRLFFKEKAPQPFQNHPPYQNLKITFPSPFFHIPYIPKTETLNDSQFAAGLSLLASELESQKNLLKKFENLKKKSSKDFLSPSTILSNAFSKVSLPNSLILRVLFFSLLFIIGIHIFYFLFFHVATIQQWPFLFWLPSTKFDNRWSPT.

Ser-134 carries the phosphoserine modification.

Interacts with sad1.

It is found in the cytoplasm. Its subcellular location is the cytoskeleton. It localises to the microtubule organizing center. The protein resides in the spindle pole body. This chain is Karyogamy meiotic segregation protein 2 (kms2), found in Schizosaccharomyces pombe (strain 972 / ATCC 24843) (Fission yeast).